The chain runs to 744 residues: Scytalone dehydratase-like protein Arp1 (744 aa).

Tyr621 contacts substrate. Active-site residues include His656 and His681. Substrate is bound at residue Asn702.

The protein belongs to the scytalone dehydratase family. Homotrimer. Each subunit contains an active site, located in the central part of the hydrophobic core of the monomer, which functions independently.

In terms of biological role, scytalone dehydratase-like protein; part of the Pks2 gene cluster that mediates the formation of infectious structures (appressoria), enabling these fungi to kill insects faster. The product of the Pks2 gene cluster is different from the one of Pks1 and has still not been identified. This is Scytalone dehydratase-like protein Arp1 from Metarhizium brunneum (strain ARSEF 3297).